The following is a 942-amino-acid chain: Isoleucine--tRNA ligase (942 aa).

A 'HIGH' region motif is present at residues 58–68 (PYANGDIHIGH). E566 contacts L-isoleucyl-5'-AMP. Positions 607 to 611 (KMSKS) match the 'KMSKS' region motif. ATP is bound at residue K610. 4 residues coordinate Zn(2+): C905, C908, C925, and C928.

Belongs to the class-I aminoacyl-tRNA synthetase family. IleS type 1 subfamily. Monomer. Requires Zn(2+) as cofactor.

It is found in the cytoplasm. It carries out the reaction tRNA(Ile) + L-isoleucine + ATP = L-isoleucyl-tRNA(Ile) + AMP + diphosphate. In terms of biological role, catalyzes the attachment of isoleucine to tRNA(Ile). As IleRS can inadvertently accommodate and process structurally similar amino acids such as valine, to avoid such errors it has two additional distinct tRNA(Ile)-dependent editing activities. One activity is designated as 'pretransfer' editing and involves the hydrolysis of activated Val-AMP. The other activity is designated 'posttransfer' editing and involves deacylation of mischarged Val-tRNA(Ile). This Pseudoalteromonas atlantica (strain T6c / ATCC BAA-1087) protein is Isoleucine--tRNA ligase.